A 126-amino-acid chain; its full sequence is 5-hydroxyisourate hydrolase (126 aa).

3 residues coordinate substrate: histidine 16, arginine 54, and tyrosine 123.

Belongs to the transthyretin family. 5-hydroxyisourate hydrolase subfamily. Homotetramer.

The enzyme catalyses 5-hydroxyisourate + H2O = 5-hydroxy-2-oxo-4-ureido-2,5-dihydro-1H-imidazole-5-carboxylate + H(+). In terms of biological role, catalyzes the hydrolysis of 5-hydroxyisourate (HIU) to 2-oxo-4-hydroxy-4-carboxy-5-ureidoimidazoline (OHCU). The sequence is that of 5-hydroxyisourate hydrolase from Pseudomonas aeruginosa (strain ATCC 15692 / DSM 22644 / CIP 104116 / JCM 14847 / LMG 12228 / 1C / PRS 101 / PAO1).